Here is a 594-residue protein sequence, read N- to C-terminus: ATP-dependent RNA helicase DDX55 (594 aa).

Residues 9–37 (WDSLPQKLNGSIRRTLEELKFTHMTPVQS) carry the Q motif motif. A Helicase ATP-binding domain is found at 40 to 223 (IPLFMNNKDI…RAGLRNPVRI (184 aa)). 53–60 (AITGSGKT) serves as a coordination point for ATP. A DEAD box motif is present at residues 171 to 174 (DEAD). Residues 254–411 (KFNKLIAFLQ…DLLPKLKAMA (158 aa)) enclose the Helicase C-terminal domain. Positions 486 to 542 (YKDKNREKQRQKMLKERKEKLETEGRKHFAKNKAWSKQKARKEKKQKVALKRKKEEG) form a coiled coil. The span at 502–512 (RKEKLETEGRK) shows a compositional bias: basic and acidic residues. The segment at 502 to 548 (RKEKLETEGRKHFAKNKAWSKQKARKEKKQKVALKRKKEEGSDIDEG) is disordered. Basic residues predominate over residues 513 to 537 (HFAKNKAWSKQKARKEKKQKVALKR). Residues 532 to 561 (KVALKRKKEEGSDIDEGDVDELLQDTRLLK) form an important for nuclear localization region.

This sequence belongs to the DEAD box helicase family. DDX55/SPB4 subfamily. Interacts with 28S rRNA. Interacts with double-stranded RNA substrates in vitro; the interaction stimulates ATPase activity.

It is found in the nucleus. It localises to the nucleoplasm. The catalysed reaction is ATP + H2O = ADP + phosphate + H(+). Its function is as follows. Probable ATP-binding RNA helicase. Has ATPase activity and is involved in the maturation of precursor large subunit rRNAs. This is ATP-dependent RNA helicase DDX55 (ddx55) from Xenopus laevis (African clawed frog).